The following is a 472-amino-acid chain: Glutamate synthase [NADPH] small chain (472 aa).

Residues Gln-41–Leu-72 form the 4Fe-4S ferredoxin-type domain. Cys-50, Cys-53, Cys-58, and Cys-62 together coordinate [4Fe-4S] cluster.

Requires [4Fe-4S] cluster as cofactor.

It catalyses the reaction 2 L-glutamate + NADP(+) = L-glutamine + 2-oxoglutarate + NADPH + H(+). Its pathway is amino-acid biosynthesis; L-glutamate biosynthesis via GLT pathway; L-glutamate from 2-oxoglutarate and L-glutamine (NADP(+) route): step 1/1. The protein operates within energy metabolism; nitrogen metabolism. Its function is as follows. Catalyzes the conversion of L-glutamine and 2-oxoglutarate into two molecules of L-glutamate. The chain is Glutamate synthase [NADPH] small chain from Halomonas elongata (strain ATCC 33173 / DSM 2581 / NBRC 15536 / NCIMB 2198 / 1H9).